A 234-amino-acid chain; its full sequence is ATP-dependent dethiobiotin synthetase BioD (234 aa).

12–17 (DVGKTF) serves as a coordination point for ATP. Position 16 (Thr16) interacts with Mg(2+). Residue Lys37 is part of the active site. Ser41 is a binding site for substrate. Residues Asp52, 118–121 (EGAG), and 178–179 (SQ) each bind ATP. Mg(2+)-binding residues include Asp52 and Glu118.

Belongs to the dethiobiotin synthetase family. As to quaternary structure, homodimer. Mg(2+) is required as a cofactor.

The protein localises to the cytoplasm. The enzyme catalyses (7R,8S)-7,8-diammoniononanoate + CO2 + ATP = (4R,5S)-dethiobiotin + ADP + phosphate + 3 H(+). It participates in cofactor biosynthesis; biotin biosynthesis; biotin from 7,8-diaminononanoate: step 1/2. Its function is as follows. Catalyzes a mechanistically unusual reaction, the ATP-dependent insertion of CO2 between the N7 and N8 nitrogen atoms of 7,8-diaminopelargonic acid (DAPA, also called 7,8-diammoniononanoate) to form a ureido ring. In Phenylobacterium zucineum (strain HLK1), this protein is ATP-dependent dethiobiotin synthetase BioD.